The sequence spans 418 residues: Serine hydroxymethyltransferase (418 aa).

Residues Leu-120 and 124–126 (GHL) contribute to the (6S)-5,6,7,8-tetrahydrofolate site. Residue Lys-229 is modified to N6-(pyridoxal phosphate)lysine. 353-355 (SPF) contributes to the (6S)-5,6,7,8-tetrahydrofolate binding site.

It belongs to the SHMT family. In terms of assembly, homodimer. It depends on pyridoxal 5'-phosphate as a cofactor.

It is found in the cytoplasm. It catalyses the reaction (6R)-5,10-methylene-5,6,7,8-tetrahydrofolate + glycine + H2O = (6S)-5,6,7,8-tetrahydrofolate + L-serine. It participates in one-carbon metabolism; tetrahydrofolate interconversion. It functions in the pathway amino-acid biosynthesis; glycine biosynthesis; glycine from L-serine: step 1/1. Functionally, catalyzes the reversible interconversion of serine and glycine with tetrahydrofolate (THF) serving as the one-carbon carrier. This reaction serves as the major source of one-carbon groups required for the biosynthesis of purines, thymidylate, methionine, and other important biomolecules. Also exhibits THF-independent aldolase activity toward beta-hydroxyamino acids, producing glycine and aldehydes, via a retro-aldol mechanism. This Psychrobacter cryohalolentis (strain ATCC BAA-1226 / DSM 17306 / VKM B-2378 / K5) protein is Serine hydroxymethyltransferase.